Reading from the N-terminus, the 256-residue chain is Thiazole synthase (256 aa).

Lys95 serves as the catalytic Schiff-base intermediate with DXP. Residues Gly156, Ala182–Gly183, and Asn204–Thr205 each bind 1-deoxy-D-xylulose 5-phosphate.

It belongs to the ThiG family. In terms of assembly, homotetramer. Forms heterodimers with either ThiH or ThiS.

It localises to the cytoplasm. The enzyme catalyses [ThiS sulfur-carrier protein]-C-terminal-Gly-aminoethanethioate + 2-iminoacetate + 1-deoxy-D-xylulose 5-phosphate = [ThiS sulfur-carrier protein]-C-terminal Gly-Gly + 2-[(2R,5Z)-2-carboxy-4-methylthiazol-5(2H)-ylidene]ethyl phosphate + 2 H2O + H(+). It functions in the pathway cofactor biosynthesis; thiamine diphosphate biosynthesis. Catalyzes the rearrangement of 1-deoxy-D-xylulose 5-phosphate (DXP) to produce the thiazole phosphate moiety of thiamine. Sulfur is provided by the thiocarboxylate moiety of the carrier protein ThiS. In vitro, sulfur can be provided by H(2)S. This is Thiazole synthase from Shigella boydii serotype 18 (strain CDC 3083-94 / BS512).